The sequence spans 146 residues: Mite group 2 allergen Der f 2 (146 aa).

The N-terminal stretch at 1-17 (MISKILCLSLLVAAVVA) is a signal peptide. 3 disulfides stabilise this stretch: Cys-25–Cys-136, Cys-38–Cys-44, and Cys-90–Cys-95.

It belongs to the NPC2 family.

It is found in the secreted. This chain is Mite group 2 allergen Der f 2 (DERF2), found in Dermatophagoides farinae (American house dust mite).